The sequence spans 291 residues: Glycine--tRNA ligase alpha subunit (291 aa).

It belongs to the class-II aminoacyl-tRNA synthetase family. In terms of assembly, tetramer of two alpha and two beta subunits.

Its subcellular location is the cytoplasm. The enzyme catalyses tRNA(Gly) + glycine + ATP = glycyl-tRNA(Gly) + AMP + diphosphate. This Trichlorobacter lovleyi (strain ATCC BAA-1151 / DSM 17278 / SZ) (Geobacter lovleyi) protein is Glycine--tRNA ligase alpha subunit.